Consider the following 128-residue polypeptide: Leucine-rich single-pass membrane protein 1 (128 aa).

A Phosphoserine modification is found at serine 24. A helical membrane pass occupies residues 65 to 85; the sequence is VGLIIVLIISLALVSFVIFLI. The stretch at 87–111 forms a coiled coil; the sequence is QTENKMEDVSRRLAAEGKDIDDLKK.

It is found in the membrane. In Bos taurus (Bovine), this protein is Leucine-rich single-pass membrane protein 1 (LSMEM1).